Consider the following 366-residue polypeptide: Envelope glycoprotein M (366 aa).

Over 1 to 17 (MMKASRSDTFMLRTWIQ) the chain is Intravirion. Residues 18–38 (LLVLFVIMFIMSAILPIAASV) traverse the membrane as a helical segment. Residues 39-83 (EGLGFPCYFPNLVDYSLLNLTLRNAAKHLTPTLFLEAPELFVYIT) lie on the Virion surface side of the membrane. The helical transmembrane segment at 84 to 104 (WSVLVDLASAIYYVVGALAIL) threads the bilayer. Residues 105–113 (QARKTHLTS) are Intravirion-facing. The chain crosses the membrane as a helical span at residues 114 to 134 (MITLQTWINLVGSHTMLFIGI). Over 135-153 (ARMWTLQLFIHVLSYKHVM) the chain is Virion surface. A helical transmembrane segment spans residues 154-174 (LAAFIYFLHFCLSYMHTLSLV). Residues 175-209 (SRNSPKWSVLLMEQHIPKQSLLSTILDYGKPLCVN) lie on the Intravirion side of the membrane. Residues 210–230 (MYLSLLALEMLVFSLGFMMAI) form a helical membrane-spanning segment. The Virion surface segment spans residues 231–235 (GNSFY). A helical membrane pass occupies residues 236–256 (ILVSDTVLASINLYFVLTTFW). The Intravirion portion of the chain corresponds to 257–269 (YMMTEMFLQDYLK). Residues 270–290 (LQFGFYLGVFSGSLILLLPVL) traverse the membrane as a helical segment. The Virion surface portion of the chain corresponds to 291 to 304 (RYEAVFVSANLHKT). The helical transmembrane segment at 305–325 (VAVNIAMIPAMCVIAMMFRLF) threads the bilayer. Residues 326-366 (RYSQQVRKPENSYTPLPKRFKKRRQKQDQQLIMVETSDEEL) lie on the Intravirion side of the membrane.

The protein belongs to the herpesviridae glycoprotein M family. Interacts (via N-terminus) with gN (via N-terminus). The gM-gN heterodimer forms the gCII complex.

It is found in the virion membrane. The protein resides in the host Golgi apparatus. The protein localises to the host trans-Golgi network. Its subcellular location is the host endosome membrane. It localises to the host nucleus inner membrane. Envelope glycoprotein important for virion assembly and egress. Plays a role in the correct incorporation of gH-gL into virion membrane. Directs the glycoprotein N (gN) to the host trans-Golgi network. The sequence is that of Envelope glycoprotein M from Saimiri sciureus (Common squirrel monkey).